Consider the following 344-residue polypeptide: Succinylglutamate desuccinylase (344 aa).

Residues His63, Glu66, and His160 each contribute to the Zn(2+) site. The active site involves Glu224.

This sequence belongs to the AspA/AstE family. Succinylglutamate desuccinylase subfamily. The cofactor is Zn(2+).

It catalyses the reaction N-succinyl-L-glutamate + H2O = L-glutamate + succinate. It functions in the pathway amino-acid degradation; L-arginine degradation via AST pathway; L-glutamate and succinate from L-arginine: step 5/5. Transforms N(2)-succinylglutamate into succinate and glutamate. The sequence is that of Succinylglutamate desuccinylase from Shewanella sp. (strain W3-18-1).